A 346-amino-acid chain; its full sequence is NADH-ubiquinone oxidoreductase chain 2 (346 aa).

11 helical membrane-spanning segments follow: residues 3–23 (PLIF…VMMS), 25–45 (HWLM…PILM), 59–79 (YFLT…INLM), 96–116 (IIMT…FWVP), 122–142 (ISLT…MSIL), 149–169 (INLN…GWGG), 178–198 (IMAY…VYNP), 200–220 (LTML…MLFI), 242–262 (TLIL…GFMP), 274–294 (SSII…YFYM), and 322–342 (ITLL…TPML).

The protein belongs to the complex I subunit 2 family. In terms of assembly, core subunit of respiratory chain NADH dehydrogenase (Complex I) which is composed of 45 different subunits. Interacts with TMEM242.

The protein localises to the mitochondrion inner membrane. It carries out the reaction a ubiquinone + NADH + 5 H(+)(in) = a ubiquinol + NAD(+) + 4 H(+)(out). Core subunit of the mitochondrial membrane respiratory chain NADH dehydrogenase (Complex I) which catalyzes electron transfer from NADH through the respiratory chain, using ubiquinone as an electron acceptor. Essential for the catalytic activity and assembly of complex I. This is NADH-ubiquinone oxidoreductase chain 2 from Equus caballus (Horse).